A 564-amino-acid polypeptide reads, in one-letter code: NAC domain-containing protein 16 (564 aa).

In terms of domain architecture, NAC spans Ser-16–Lys-166. Residues Val-115–Lys-172 mediate DNA binding. Residues Phe-535–Val-555 traverse the membrane as a helical segment.

As to expression, expressed in roots, rosette leaves, shoot apex, stems and flowers.

The protein resides in the membrane. Its subcellular location is the nucleus. Its function is as follows. Transcriptional activator activated by proteolytic cleavage through regulated intramembrane proteolysis (RIP). Transcriptional activator that promotes leaf senescence by up-regulating senescence-associated genes in response to developmental and stress-induced senescence signals. Functions in salt and oxidative stress-responsive signaling pathways. Binds to the promoter of NAC029/NAP and NAC059/ORS1 genes. This is NAC domain-containing protein 16 from Arabidopsis thaliana (Mouse-ear cress).